The primary structure comprises 467 residues: MLYSENDKRKHESYRIPLFGSEEESTSIPKYVLKKEPMEPRIAYQLVKDQLMDEGNARQNLATFCQTYMEKEAEILMAETLEKNAIDKSEYPQTAELENRCVNILADLWNAPKEMSYLGTSTVGSSEACMLGGLAMKFRWRNNAEKRGLDIQAKRPNLIISSGYQVCWEKFCVYWDVDMRVVPMDKEHLSLDVEKVFELVDEYTIGIVGILGITYTGKFDDIALLDEKVEAYNEANEHQLVIHIDGASGAMFTPFVNPELPWDFRLKNVVSINTSGHKYGLVYPGVGWILWKDKEYLPKELIFEVSYLGGSMPTMAINFSRSASQIIGQYYNFLRYGFEGYREIHEKTKKTALYLSKTVEKSGYFEIINDGSNLPIVCYKLKDDLDVEWTLYDLADQLLMKGWQVPAYPLPADLSDTIIQRFVCRADLGYNVAEEFAADFADALHNLEHARVLYHDKERNDSYGFTH.

Lysine 278 bears the N6-(pyridoxal phosphate)lysine mark.

It belongs to the group II decarboxylase family. Pyridoxal 5'-phosphate is required as a cofactor.

It carries out the reaction L-glutamate + H(+) = 4-aminobutanoate + CO2. The sequence is that of Probable glutamate decarboxylase gamma from Listeria innocua serovar 6a (strain ATCC BAA-680 / CLIP 11262).